The sequence spans 1150 residues: ATP-dependent helicase/deoxyribonuclease subunit B (1150 aa).

8-15 (GRAGSGKS) serves as a coordination point for ATP. [4Fe-4S] cluster contacts are provided by C786, C1106, C1109, and C1115.

Belongs to the helicase family. AddB/RexB type 1 subfamily. In terms of assembly, heterodimer of AddA and AddB. Mg(2+) serves as cofactor. The cofactor is [4Fe-4S] cluster.

The heterodimer acts as both an ATP-dependent DNA helicase and an ATP-dependent, dual-direction single-stranded exonuclease. Recognizes the chi site generating a DNA molecule suitable for the initiation of homologous recombination. The AddB subunit has 5' -&gt; 3' nuclease activity but not helicase activity. This Clostridium botulinum (strain Langeland / NCTC 10281 / Type F) protein is ATP-dependent helicase/deoxyribonuclease subunit B.